We begin with the raw amino-acid sequence, 323 residues long: Ferrochelatase (323 aa).

His-196 and Glu-277 together coordinate Fe cation.

This sequence belongs to the ferrochelatase family.

The protein localises to the cytoplasm. It carries out the reaction heme b + 2 H(+) = protoporphyrin IX + Fe(2+). It participates in porphyrin-containing compound metabolism; protoheme biosynthesis; protoheme from protoporphyrin-IX: step 1/1. Functionally, catalyzes the ferrous insertion into protoporphyrin IX. This Haemophilus influenzae (strain PittEE) protein is Ferrochelatase.